The chain runs to 105 residues: MHGNVPTLPQYIIELIPQTEIDLQCHEQLNSSEDEDEDEVDHLQEQPQQARRDEQHPCYLIETQCCRCESLVQLAVQSSTKELRILQQMLMGTVELVCPLCATRR.

The tract at residues Met-1–Glu-45 is E7 terminal domain. An LXCXE motif; interaction with host RB1 and TMEM173/STING motif is present at residues Leu-23–Glu-27. Residues Asn-30–Asp-53 form a disordered region. Residues Cys-65–Cys-101 fold into a zinc finger. Residues Leu-83–Met-91 carry the Nuclear export signal motif.

It belongs to the papillomaviridae E7 protein family. Homodimer. Homooligomer. Interacts with host RB1; this interaction induces dissociation of RB1-E2F1 complex thereby disrupting RB1 activity. Interacts with host EP300; this interaction represses EP300 transcriptional activity. Interacts with protein E2; this interaction inhibits E7 oncogenic activity. Interacts with host TMEM173/STING; this interaction impairs the ability of TMEM173/STING to sense cytosolic DNA and promote the production of type I interferon (IFN-alpha and IFN-beta). Highly phosphorylated.

The protein resides in the host cytoplasm. It localises to the host nucleus. Plays a role in viral genome replication by driving entry of quiescent cells into the cell cycle. Stimulation of progression from G1 to S phase allows the virus to efficiently use the cellular DNA replicating machinery to achieve viral genome replication. E7 protein has both transforming and trans-activating activities. Induces the disassembly of the E2F1 transcription factor from RB1, with subsequent transcriptional activation of E2F1-regulated S-phase genes. Interferes with host histone deacetylation mediated by HDAC1 and HDAC2, leading to transcription activation. Also plays a role in the inhibition of both antiviral and antiproliferative functions of host interferon alpha. Interaction with host TMEM173/STING impairs the ability of TMEM173/STING to sense cytosolic DNA and promote the production of type I interferon (IFN-alpha and IFN-beta). This Human papillomavirus type 53 protein is Protein E7.